Reading from the N-terminus, the 144-residue chain is Small ribosomal subunit protein uS12 (144 aa).

Residue Asp-103 is modified to 3-methylthioaspartic acid. Positions 125-144 (QQGRSRYGAKKGKAAPAKKK) are disordered. Residues 131 to 144 (YGAKKGKAAPAKKK) are compositionally biased toward basic residues.

It belongs to the universal ribosomal protein uS12 family. Part of the 30S ribosomal subunit. Contacts proteins S8 and S17. May interact with IF1 in the 30S initiation complex.

In terms of biological role, with S4 and S5 plays an important role in translational accuracy. Interacts with and stabilizes bases of the 16S rRNA that are involved in tRNA selection in the A site and with the mRNA backbone. Located at the interface of the 30S and 50S subunits, it traverses the body of the 30S subunit contacting proteins on the other side and probably holding the rRNA structure together. The combined cluster of proteins S8, S12 and S17 appears to hold together the shoulder and platform of the 30S subunit. The sequence is that of Small ribosomal subunit protein uS12 from Dehalococcoides mccartyi (strain ATCC BAA-2100 / JCM 16839 / KCTC 5957 / BAV1).